Reading from the N-terminus, the 262-residue chain is PsbP domain-containing protein 6, chloroplastic (262 aa).

A disulfide bridge connects residues Cys128 and Cys132.

It belongs to the PsbP family.

The protein resides in the plastid. Its subcellular location is the chloroplast thylakoid lumen. May be involved in the redox regulation of photosystem II. In Arabidopsis thaliana (Mouse-ear cress), this protein is PsbP domain-containing protein 6, chloroplastic (PPD6).